A 108-amino-acid chain; its full sequence is uncharacterized protein (108 aa).

The next 3 membrane-spanning stretches (helical) occupy residues 24-44 (LWIT…GGLL), 55-75 (AHMA…YLAM), and 88-108 (RFEI…SIGI).

To cation A.eutrophus efflux system protein CzcD.

The protein resides in the cell membrane. This is an uncharacterized protein from Geobacillus stearothermophilus (Bacillus stearothermophilus).